Reading from the N-terminus, the 291-residue chain is Ribose-phosphate pyrophosphokinase (291 aa).

ATP-binding positions include 34–36 (DGE) and 93–94 (RQ). 2 residues coordinate Mg(2+): His-127 and Asp-165. Lys-188 is an active-site residue. D-ribose 5-phosphate contacts are provided by residues Arg-190, Asp-216, and 220–224 (STGGT).

Belongs to the ribose-phosphate pyrophosphokinase family. Class III (archaeal) subfamily. The cofactor is Mg(2+).

The protein resides in the cytoplasm. It carries out the reaction D-ribose 5-phosphate + ATP = 5-phospho-alpha-D-ribose 1-diphosphate + AMP + H(+). The protein operates within metabolic intermediate biosynthesis; 5-phospho-alpha-D-ribose 1-diphosphate biosynthesis; 5-phospho-alpha-D-ribose 1-diphosphate from D-ribose 5-phosphate (route I): step 1/1. Involved in the biosynthesis of the central metabolite phospho-alpha-D-ribosyl-1-pyrophosphate (PRPP) via the transfer of pyrophosphoryl group from ATP to 1-hydroxyl of ribose-5-phosphate (Rib-5-P). In Sulfolobus acidocaldarius (strain ATCC 33909 / DSM 639 / JCM 8929 / NBRC 15157 / NCIMB 11770), this protein is Ribose-phosphate pyrophosphokinase.